The primary structure comprises 406 residues: Putative F-box protein At5g38270 (406 aa).

One can recognise an F-box domain in the interval 20–67 (HDWSKLCPDILRSILESLSSTDFHRAKTVCSDWYSNWKTCVKPLCPWR).

The protein is Putative F-box protein At5g38270 of Arabidopsis thaliana (Mouse-ear cress).